The sequence spans 117 residues: UPF0122 protein Cthe_0771 (117 aa).

This sequence belongs to the UPF0122 family.

In terms of biological role, might take part in the signal recognition particle (SRP) pathway. This is inferred from the conservation of its genetic proximity to ftsY/ffh. May be a regulatory protein. The polypeptide is UPF0122 protein Cthe_0771 (Acetivibrio thermocellus (strain ATCC 27405 / DSM 1237 / JCM 9322 / NBRC 103400 / NCIMB 10682 / NRRL B-4536 / VPI 7372) (Clostridium thermocellum)).